The chain runs to 70 residues: Guanine nucleotide-binding protein subunit gamma-1 (70 aa).

A Cysteine methyl ester modification is found at C67. C67 carries the S-geranylgeranyl cysteine lipid modification. The propeptide at 68–70 (TVL) is removed in mature form.

It belongs to the G protein gamma family. In terms of assembly, g proteins are composed of 3 units, alpha, beta and gamma. Predominantly expressed in the central nervous system.

Its subcellular location is the cell membrane. In terms of biological role, guanine nucleotide-binding proteins (G proteins) are involved as a modulator or transducer in various transmembrane signaling systems. The beta and gamma chains are required for the GTPase activity, for replacement of GDP by GTP, and for G protein-effector interaction. This is Guanine nucleotide-binding protein subunit gamma-1 (Ggamma1) from Drosophila melanogaster (Fruit fly).